Consider the following 444-residue polypeptide: MPTWIPNNLCAQPTTRNAKPPSNGHPQATQQQSAPGSLAYRNSSNIPNGATNHVRQQKWQYTRSGHRKMADGEAVISTVNNVEEVHGQLFEVAPRYVNLSYIGEGAYGMVASALDTITRDRVAIKKISPFEHQTFCQRTLREIKILNRFKHENIINIQEIIRSETVDSLKDIYIVQCLMETDLYKLLKTQKLSNDHVCYFLYQILRGLKYIHSANVLHRDLKPSNLLLNTTCDLKICDFGLARVTDPQTDHTGFLTEYVATRWYRAPEIMLNSKGYTKSIDVWSVGCILAEMLSNRPLFPGKHYLDQLNLILAVVGSPSNADLQCIINDKARSYLISLPHKPKQPWARLYPGADPRALDLLDKMLTFNPHNRIDIEQALAHPYLEQYYDPGDEPVCEEPFTLEMEFDDLPKEKLKELIWEEAEAHHRRMEAEAAARNNGGQNPV.

Composition is skewed to polar residues over residues 1 to 17 (MPTW…TTRN) and 24 to 56 (GHPQ…HVRQ). A disordered region spans residues 1–56 (MPTWIPNNLCAQPTTRNAKPPSNGHPQATQQQSAPGSLAYRNSSNIPNGATNHVRQ). Residues 96–384 (YVNLSYIGEG…IEQALAHPYL (289 aa)) enclose the Protein kinase domain. ATP contacts are provided by residues 102–110 (IGEGAYGMV) and Lys-125. The active-site Proton acceptor is Asp-220. Phosphothreonine is present on Thr-256. The TXY motif lies at 256–258 (TEY). Tyr-258 is subject to Phosphotyrosine.

The protein belongs to the protein kinase superfamily. CMGC Ser/Thr protein kinase family. MAP kinase subfamily. Isoform a interacts with gck-1 (via N-terminus). It depends on Mg(2+) as a cofactor. Post-translationally, isoform a is phosphorylated at the pachytene stage during oogenesis and is negatively regulated by gck-1. Isoform b is phosphorylated in proximal oocytes. In terms of tissue distribution, expressed in cells lining the rectum. Isoform a is expressed in nervous system, body wall muscles and posterior intestine. Isoform b expression may be restricted to germline.

The enzyme catalyses L-seryl-[protein] + ATP = O-phospho-L-seryl-[protein] + ADP + H(+). It carries out the reaction L-threonyl-[protein] + ATP = O-phospho-L-threonyl-[protein] + ADP + H(+). With respect to regulation, activated by dual phosphorylation at Thr-256 and Tyr-258. May be inactivated by lip-1-mediated dephosphorylation. Functionally, functions in let-60 Ras signaling pathway; acts downstream of lin-45 raf kinase, but before the lin-1 gene product in controlling vulval cell differentiation. Plays a negative role in proximal germline proliferation in the mitotic zone. Required for progression of developing oocytes through the pachytene stage, perhaps acting after efl-1/dpl-1-mediated gene activation and before gld-1 down-regulation. May play a role in global X chromosome reactivation or be indirectly required for progression of germ cells through meiosis to the point where X reactivation occurs. In oocytes, inhibits the activity of the chloride channel clh-3, likely by activating gck-3. Plays a role in response to M.nematophilum-mediated bacterial infection by promoting tail swelling and preventing constipation. Involved in fluid homeostasis. In addition, involved in the up-regulation of lysozyme ilys-3 expression in the intestine in responses to M.nematophilum-mediated bacterial infection. By phosphorylating transcription factor skn-1 (isoform c) may play a role in increasing life span downstream of lin-45, let-60 and mek-2. By up-regulating cep-1 and down-regulating gld-1 expression in the late pachytene stage, plays a role in germline apoptosis in response to DNA damage. Regulates egl-1 expression in response to DNA damage, probably upstream of cep-1. Suppresses germline tumor formation by preventing the dedifferentiation of secondary spermatocytes probably upstream of rskn-1. The protein is Mitogen-activated protein kinase mpk-1 (mpk-1) of Caenorhabditis elegans.